The primary structure comprises 151 residues: Large ribosomal subunit protein uL13 (151 aa).

Positions 126–151 are disordered; sequence YPGPNHPHQAQKPEELTLNTIPNGDK. The segment covering 142-151 has biased composition (polar residues); that stretch reads TLNTIPNGDK.

The protein belongs to the universal ribosomal protein uL13 family. As to quaternary structure, part of the 50S ribosomal subunit.

Its function is as follows. This protein is one of the early assembly proteins of the 50S ribosomal subunit, although it is not seen to bind rRNA by itself. It is important during the early stages of 50S assembly. This Crocosphaera subtropica (strain ATCC 51142 / BH68) (Cyanothece sp. (strain ATCC 51142)) protein is Large ribosomal subunit protein uL13.